Here is a 320-residue protein sequence, read N- to C-terminus: Beta-sarcoglycan (320 aa).

The segment covering Met1–Ala10 has biased composition (low complexity). The interval Met1 to Val34 is disordered. Residues Met1–Ala67 are Cytoplasmic-facing. The span at Ser23 to Val34 shows a compositional bias: basic and acidic residues. The helical; Signal-anchor for type II membrane protein transmembrane segment at Ile68–Ile88 threads the bilayer. The Extracellular segment spans residues Trp89–His320. Residues Asn160, Asn213, and Asn260 are each glycosylated (N-linked (GlcNAc...) asparagine). 2 disulfides stabilise this stretch: Cys290/Cys316 and Cys292/Cys309.

The protein belongs to the sarcoglycan beta/delta/gamma/zeta family. Cross-link to form 2 major subcomplexes: one consisting of SGCB, SGCD and SGCG and the other consisting of SGCB and SGCD. The association between SGCB and SGCG is particularly strong while SGCA is loosely associated with the other sarcoglycans. In terms of processing, disulfide bonds are present.

Its subcellular location is the cell membrane. The protein localises to the sarcolemma. It is found in the cytoplasm. The protein resides in the cytoskeleton. Its function is as follows. Component of the sarcoglycan complex, a subcomplex of the dystrophin-glycoprotein complex which forms a link between the F-actin cytoskeleton and the extracellular matrix. The protein is Beta-sarcoglycan (SGCB) of Mesocricetus auratus (Golden hamster).